A 363-amino-acid polypeptide reads, in one-letter code: Eukaryotic translation initiation factor 3 subunit H (363 aa).

The MPN domain maps to 13-163 (VQVEALVVMK…LRAFRLSTAF (151 aa)).

This sequence belongs to the eIF-3 subunit H family. In terms of assembly, component of the eukaryotic translation initiation factor 3 (eIF-3) complex.

It localises to the cytoplasm. Component of the eukaryotic translation initiation factor 3 (eIF-3) complex, which is involved in protein synthesis of a specialized repertoire of mRNAs and, together with other initiation factors, stimulates binding of mRNA and methionyl-tRNAi to the 40S ribosome. The eIF-3 complex specifically targets and initiates translation of a subset of mRNAs involved in cell proliferation. The protein is Eukaryotic translation initiation factor 3 subunit H of Pyricularia oryzae (strain 70-15 / ATCC MYA-4617 / FGSC 8958) (Rice blast fungus).